Consider the following 159-residue polypeptide: Large ribosomal subunit protein uL15 (159 aa).

Residues 1-13 (MRLNELRDNDGAT) are compositionally biased toward basic and acidic residues. Positions 1–41 (MRLNELRDNDGATKIRTRVGRGIGSGKGKTGGRGVKGQKSR) are disordered. A compositionally biased stretch (gly residues) spans 21 to 35 (RGIGSGKGKTGGRGV).

The protein belongs to the universal ribosomal protein uL15 family. Part of the 50S ribosomal subunit.

Functionally, binds to the 23S rRNA. This is Large ribosomal subunit protein uL15 from Maricaulis maris (strain MCS10) (Caulobacter maris).